A 419-amino-acid chain; its full sequence is UPF0329 protein ECU07_1890/ECU10_0010 (419 aa).

Residues 136 to 165 (RQRKREEETERSVKELVGDEEKAKSKEEKA) are compositionally biased toward basic and acidic residues. Residues 136-222 (RQRKREEETE…KGGKKKSKGG (87 aa)) form a disordered region. Residues 213-222 (KGGKKKSKGG) are compositionally biased toward basic residues.

The protein belongs to the UPF0329 family.

The polypeptide is UPF0329 protein ECU07_1890/ECU10_0010 (Encephalitozoon cuniculi (strain GB-M1) (Microsporidian parasite)).